A 207-amino-acid chain; its full sequence is Small ribosomal subunit protein uS4 (207 aa).

The S4 RNA-binding domain occupies 97–160 (SRLDNVVYRM…KKQARIVEAL (64 aa)).

Belongs to the universal ribosomal protein uS4 family. As to quaternary structure, part of the 30S ribosomal subunit. Contacts protein S5. The interaction surface between S4 and S5 is involved in control of translational fidelity.

Its function is as follows. One of the primary rRNA binding proteins, it binds directly to 16S rRNA where it nucleates assembly of the body of the 30S subunit. Functionally, with S5 and S12 plays an important role in translational accuracy. This Burkholderia mallei (strain NCTC 10247) protein is Small ribosomal subunit protein uS4.